A 360-amino-acid chain; its full sequence is DNA replication and repair protein RecF (360 aa).

Residue 30–37 (GHNGSGKT) coordinates ATP.

It belongs to the RecF family.

The protein resides in the cytoplasm. Its function is as follows. The RecF protein is involved in DNA metabolism; it is required for DNA replication and normal SOS inducibility. RecF binds preferentially to single-stranded, linear DNA. It also seems to bind ATP. The chain is DNA replication and repair protein RecF from Actinobacillus pleuropneumoniae serotype 3 (strain JL03).